The sequence spans 164 residues: Two-component response regulator ARR16 (164 aa).

The Response regulatory domain occupies 30–160; sequence HVLAVDDNLI…DVEKLKCHLM (131 aa). At Asp-93 the chain carries 4-aspartylphosphate.

Belongs to the ARR family. Type-A subfamily. Two-component system major event consists of a His-to-Asp phosphorelay between a sensor histidine kinase (HK) and a response regulator (RR). In plants, the His-to-Asp phosphorelay involves an additional intermediate named Histidine-containing phosphotransfer protein (HPt). This multistep phosphorelay consists of a His-Asp-His-Asp sequential transfer of a phosphate group between first a His and an Asp of the HK protein, followed by the transfer to a conserved His of the HPt protein and finally the transfer to an Asp in the receiver domain of the RR protein.

The protein localises to the nucleus. Its function is as follows. Functions as a response regulator involved in His-to-Asp phosphorelay signal transduction system. Phosphorylation of the Asp residue in the receiver domain activates the ability of the protein to promote the transcription of target genes. Type-A response regulators seem to act as negative regulators of the cytokinin signaling. The chain is Two-component response regulator ARR16 (ARR16) from Arabidopsis thaliana (Mouse-ear cress).